We begin with the raw amino-acid sequence, 351 residues long: Cytochrome c biogenesis protein CcsA (351 aa).

8 consecutive transmembrane segments (helical) span residues 17–37 (VLFL…LPAI), 38–58 (NALG…LLGA), 68–88 (LSNL…VHLI), 97–117 (LVGV…TLTL), 143–163 (MMLS…FLVI), 259–279 (IIGL…VWAN), 286–306 (WSWD…AAYL), and 320–340 (AILA…VNLL).

The protein belongs to the CcmF/CycK/Ccl1/NrfE/CcsA family. May interact with ccs1.

It localises to the cellular thylakoid membrane. Functionally, required during biogenesis of c-type cytochromes (cytochrome c6 and cytochrome f) at the step of heme attachment. This is Cytochrome c biogenesis protein CcsA from Nostoc sp. (strain PCC 7120 / SAG 25.82 / UTEX 2576).